A 420-amino-acid polypeptide reads, in one-letter code: MAARNAFYAQSGGVTAVINASACGVLETARQYPDRIGTVYAGRNGIVGALTEDLIDTGQESAEAIAALRHTPSGAFGSCRYKLKGLEENRAQYERLIEVFRAHDIGYFFYNGGGDSADTCLKVSQLSEKLGYPLQAVHIPKTVDNDLPITDCCPGFGSVAKYIAVSVREASFDVRSMAATSTCIFVLEVMGRHAGWIAAAGGLASDERHELALVILFPEQVFDPERFLRAVDEKVRSHGYCSVVVSEGIRGADGRFVAESGSRDVFGHARLGGVAPVIADLIKERLGYKYHWAVADYLQRAARHIASRTDVEQAYAVGKAGVEMALKGLSAVMPAIVRTSDSPYRWEITAASLAEVANVEKKMPLEFISADGFGITEACRRYLRPLIEGEDYPPYAGGLPDYVTLCNVAVPKKLAASFSV.

Residue Gly-13 coordinates diphosphate. Residues 142–144 (TVD), 190–192 (MGR), Glu-247, and 297–300 (YLQR) contribute to the substrate site. Asp-144 (proton acceptor) is an active-site residue.

It belongs to the phosphofructokinase type A (PFKA) family. PPi-dependent PFK group II subfamily. Clade 'B2' sub-subfamily. In terms of assembly, homodimer. Mg(2+) serves as cofactor. The cofactor is Co(2+). Requires Mn(2+) as cofactor.

It is found in the cytoplasm. The catalysed reaction is beta-D-fructose 6-phosphate + diphosphate = beta-D-fructose 1,6-bisphosphate + phosphate + H(+). It functions in the pathway carbohydrate degradation; glycolysis; D-glyceraldehyde 3-phosphate and glycerone phosphate from D-glucose: step 3/4. Non-allosteric. In terms of biological role, catalyzes the phosphorylation of D-fructose 6-phosphate, the first committing step of glycolysis. Uses inorganic phosphate (PPi) as phosphoryl donor instead of ATP like common ATP-dependent phosphofructokinases (ATP-PFKs), which renders the reaction reversible, and can thus function both in glycolysis and gluconeogenesis. Consistently, PPi-PFK can replace the enzymes of both the forward (ATP-PFK) and reverse (fructose-bisphosphatase (FBPase)) reactions. The chain is Pyrophosphate--fructose 6-phosphate 1-phosphotransferase from Methylococcus capsulatus (strain ATCC 33009 / NCIMB 11132 / Bath).